The sequence spans 280 residues: MSEQPVYGAAAEAPKPRVKVRTHHLHKWKAEGHKWAMLTAYDYSTAAVFDEAEIPVLLVGDSAANVVYGYDTTVPVTLDELIPLVRGVVRGAPHALVVADLPFGSYEAGPQQALATATRMLKETGAHAVKLEGGERVADQIAAVSAAGIPVMAHIGFTPQSVNGLGGFRVQGRGDAAEQTIHDAIAVQEAGAFAVVMEMVPAELATQITGKLTIPTVGIGAGPSCDAQVLVWQDMAGMTNGKTAKFVKRFGAVGDELRRAASDYAREVATGAFPADEHSY.

2 residues coordinate Mg(2+): aspartate 61 and aspartate 100. 3-methyl-2-oxobutanoate-binding positions include 61–62 (DS), aspartate 100, and lysine 130. Residue glutamate 132 coordinates Mg(2+). The active-site Proton acceptor is the glutamate 198.

The protein belongs to the PanB family. In terms of assembly, homodecamer; pentamer of dimers. Mg(2+) is required as a cofactor.

Its subcellular location is the cytoplasm. The enzyme catalyses 3-methyl-2-oxobutanoate + (6R)-5,10-methylene-5,6,7,8-tetrahydrofolate + H2O = 2-dehydropantoate + (6S)-5,6,7,8-tetrahydrofolate. It participates in cofactor biosynthesis; (R)-pantothenate biosynthesis; (R)-pantoate from 3-methyl-2-oxobutanoate: step 1/2. Its function is as follows. Catalyzes the reversible reaction in which hydroxymethyl group from 5,10-methylenetetrahydrofolate is transferred onto alpha-ketoisovalerate to form ketopantoate. In Mycolicibacterium vanbaalenii (strain DSM 7251 / JCM 13017 / BCRC 16820 / KCTC 9966 / NRRL B-24157 / PYR-1) (Mycobacterium vanbaalenii), this protein is 3-methyl-2-oxobutanoate hydroxymethyltransferase.